The primary structure comprises 151 residues: uncharacterized protein (151 aa).

Positions 2-133 (KTLIVEDNPK…VFVEAVHYSQ (132 aa)) constitute a Response regulatory domain. Asp-53 carries the 4-aspartylphosphate modification.

This is an uncharacterized protein from Sinorhizobium fredii (strain NBRC 101917 / NGR234).